We begin with the raw amino-acid sequence, 224 residues long: UPF0758 protein VF_0126 (224 aa).

An MPN domain is found at 102–224; the sequence is ALTSPEHTKR…IVSFAERGWI (123 aa). Positions 173, 175, and 186 each coordinate Zn(2+). The short motif at 173 to 186 is the JAMM motif element; the sequence is HNHPSGVAEPSQAD.

The protein belongs to the UPF0758 family.

In Aliivibrio fischeri (strain ATCC 700601 / ES114) (Vibrio fischeri), this protein is UPF0758 protein VF_0126.